A 393-amino-acid polypeptide reads, in one-letter code: Iripin-5 (393 aa).

Residues methionine 1 to alanine 16 form the signal peptide. N-linked (GlcNAc...) asparagine glycosylation is found at asparagine 198 and asparagine 245.

The protein belongs to the serpin family. In terms of tissue distribution, highly expressed in female salivary gland during blood feeding. Expressed in female midgut and ovary during blood feeding.

Its subcellular location is the secreted. Serine protease inhibitor that modulates blood feeding of ticks on vertebrate species. Inhibits host neutrophil elastase (ELANE) and proteinase 3/myeloblastin (PRTN3). Moderately inhibits host chymase, cathepsin G (CTSG), trypsin and alpha-chymotrypsin. Decreases host neutrophil migration. Decreases nitric oxide production by host macrophages. Decreases host complement activity. The chain is Iripin-5 from Ixodes ricinus (Common tick).